The chain runs to 102 residues: Small ribosomal subunit protein uS10 (102 aa).

The protein belongs to the universal ribosomal protein uS10 family. In terms of assembly, part of the 30S ribosomal subunit.

Functionally, involved in the binding of tRNA to the ribosomes. The protein is Small ribosomal subunit protein uS10 of Listeria innocua serovar 6a (strain ATCC BAA-680 / CLIP 11262).